The following is a 633-amino-acid chain: MPAIRLPDGSVRQFENPVSVHDVAASIGAGLARAALAGRVDGALVDTSFVIDHDVDLAIVTDKDADGLGILRHSTAHLLACAVKELFPEAQVTIGPEIENGFYYDFSYKRPFTPEDLVAIEKKMAELAKKDIPVERYELPRDEAIAYFKSIGEAYKAEIIESIPQGEVLSLYREGNFTDLCRGPHVPSTGKLKVFKLMKVAGAYWRGDSKNEMLQRIYGTAWAKKEDLEAYLHMLEEAEKRDHRKLGRQLDLFHIQDEAPGMVFWHPKGWTLWQQVEQYMRRVLIANDYQEVRTPQIVDRSLWEKSGHWAMYQDLMFTTESEKRDYAVKPMNCPCHIQIFNQGLKSYRDLPLRMAEFGSCHRNEPSGSLHGIMRVRNFVQDDAHIFCTEAQMQPETAAFIDLLQAVYQDFGFDNILIKLSTRPEKRVGADELWDQAEAALAAALAAKGLAYELQPGEGAFYGPKIEFSLKDCLGRVWQCGTLQLDFNLPVRLGAEYVSEDNAKKHPVMLHRAILGSLERFIGILIEHHAGAMPLWLAPVQMAVLNITEAQAEYATEVAETLKKQGFRVDLDLRNEKISYKIREHSLQKLPYQIIVGDKEKAGALVAVRARTGEDLGQIPLSQFIERLKSELLH.

One can recognise a TGS domain in the interval 1 to 61 (MPAIRLPDGS…DHDVDLAIVT (61 aa)). The catalytic stretch occupies residues 242 to 533 (DHRKLGRQLD…LIEHHAGAMP (292 aa)). C333, H384, and H510 together coordinate Zn(2+).

The protein belongs to the class-II aminoacyl-tRNA synthetase family. Homodimer. Zn(2+) is required as a cofactor.

It localises to the cytoplasm. The enzyme catalyses tRNA(Thr) + L-threonine + ATP = L-threonyl-tRNA(Thr) + AMP + diphosphate + H(+). Catalyzes the attachment of threonine to tRNA(Thr) in a two-step reaction: L-threonine is first activated by ATP to form Thr-AMP and then transferred to the acceptor end of tRNA(Thr). Also edits incorrectly charged L-seryl-tRNA(Thr). In Laribacter hongkongensis (strain HLHK9), this protein is Threonine--tRNA ligase.